Consider the following 201-residue polypeptide: Probable GTP-binding protein EngB (201 aa).

An EngB-type G domain is found at 21–191 (AAPQIILAGR…WNLLDVTAIP (171 aa)). GTP-binding positions include 29–36 (GRSNVGKS), 56–60 (GKTRS), 75–78 (DLPG), 142–145 (TKSD), and 168–172 (ICVSS). 2 residues coordinate Mg(2+): S36 and T58.

It belongs to the TRAFAC class TrmE-Era-EngA-EngB-Septin-like GTPase superfamily. EngB GTPase family. Mg(2+) is required as a cofactor.

Necessary for normal cell division and for the maintenance of normal septation. In Maridesulfovibrio salexigens (strain ATCC 14822 / DSM 2638 / NCIMB 8403 / VKM B-1763) (Desulfovibrio salexigens), this protein is Probable GTP-binding protein EngB.